The chain runs to 257 residues: Protein MoaE (257 aa).

Residue 6-29 (VITGGGTGIGAACARLMHPAGERV) coordinates NAD(+). The disordered stretch occupies residues 75–96 (LMSSSAAPAGWATAPPPRPATA). A substrate-binding site is contributed by Ser-132. The Proton acceptor role is filled by Tyr-145.

It belongs to the short-chain dehydrogenases/reductases (SDR) family.

Functionally, might catalyze the conversion of monoamine compounds or their metabolites. The chain is Protein MoaE (moaE) from Klebsiella aerogenes (Enterobacter aerogenes).